Here is a 260-residue protein sequence, read N- to C-terminus: Thiazole synthase (260 aa).

Lys-96 (schiff-base intermediate with DXP) is an active-site residue. 1-deoxy-D-xylulose 5-phosphate contacts are provided by residues Gly-157, 184 to 185 (AG), and 206 to 207 (NT).

The protein belongs to the ThiG family. As to quaternary structure, homotetramer. Forms heterodimers with either ThiH or ThiS.

It is found in the cytoplasm. It carries out the reaction [ThiS sulfur-carrier protein]-C-terminal-Gly-aminoethanethioate + 2-iminoacetate + 1-deoxy-D-xylulose 5-phosphate = [ThiS sulfur-carrier protein]-C-terminal Gly-Gly + 2-[(2R,5Z)-2-carboxy-4-methylthiazol-5(2H)-ylidene]ethyl phosphate + 2 H2O + H(+). It participates in cofactor biosynthesis; thiamine diphosphate biosynthesis. In terms of biological role, catalyzes the rearrangement of 1-deoxy-D-xylulose 5-phosphate (DXP) to produce the thiazole phosphate moiety of thiamine. Sulfur is provided by the thiocarboxylate moiety of the carrier protein ThiS. In vitro, sulfur can be provided by H(2)S. This is Thiazole synthase from Rhodopseudomonas palustris (strain HaA2).